The chain runs to 553 residues: MATDMSQGELIHPKALPLIVGAQLIHADKLGEKADDSTMPIRRAVNSTRETPPKSKLAEGEEEKPEPDGSSEESISTVEEPENETPPAPSREAEQPKGEPESGEKEESKSAEETKKEEKDQSKEKEKKVKKTIPAWATLSASQLARAQKQTPMASSPRPKMDAILTEAIKACFQKSGASVVAIRKYIIHKYPSLDLERRGYLLKQALKRELNRGVIKQVKGKGASGSFVVVQKSKTPQKSKNRKKGSAVDPEPQVKLEDVLPLAFTRLCEPKEASYSLIRKYVSQYYPKLRVDIRPQLLKNALQRAVERGQLEQITGKGASGTFQLKKSGEKPLLGGSLMEYAILSAIAAMNEPKTCSTTALKKYVLENHPGTNSNYQMHLLKKTLQKCEKNGWLEQISGKGFSGTFQLCFPYYPSPGVLFPKKVSDGSEDEDEEEDEEESSEDSEDEEPPPKRSLQKKTPAKPQGKTASMKQRGAKPARKVPAAQRGKVRPLPKKAPPKAKTPARKGRPAPSAVKKPSGSTSKKPVANARKEAKLPGKGKSAMKKKSFKTKK.

Ala2 carries the N-acetylalanine modification. Ser6 is modified (phosphoserine). The segment at 30-131 is disordered; that stretch reads LGEKADDSTM…SKEKEKKVKK (102 aa). A Phosphothreonine modification is found at Thr51. A compositionally biased stretch (acidic residues) spans 60-71; sequence GEEEKPEPDGSS. Lys64 is covalently cross-linked (Glycyl lysine isopeptide (Lys-Gly) (interchain with G-Cter in SUMO2)). Thr85 is subject to Phosphothreonine. The span at 91-127 shows a compositional bias: basic and acidic residues; that stretch reads REAEQPKGEPESGEKEESKSAEETKKEEKDQSKEKEK. Residue Lys97 forms a Glycyl lysine isopeptide (Lys-Gly) (interchain with G-Cter in SUMO2) linkage. Phosphoserine is present on residues Ser142, Ser155, and Ser156. The H15 1 domain maps to 157-232; sequence PRPKMDAILT…GASGSFVVVQ (76 aa). Lys190 carries the post-translational modification N6-acetyllysine. The tract at residues 231-251 is disordered; it reads VQKSKTPQKSKNRKKGSAVDP. A compositionally biased stretch (basic residues) spans 236-246; sequence TPQKSKNRKKG. The residue at position 247 (Ser247) is a Phosphoserine. A PxVxL motif motif is present at residues 253-257; sequence PQVKL. 2 consecutive H15 domains span residues 253-328 and 335-411; these read PQVK…QLKK and LGGS…QLCF. Lys256 participates in a covalent cross-link: Glycyl lysine isopeptide (Lys-Gly) (interchain with G-Cter in SUMO2). The interval 422 to 553 is disordered; that stretch reads PKKVSDGSED…MKKKSFKTKK (132 aa). Over residues 428–449 the composition is skewed to acidic residues; it reads GSEDEDEEEDEEESSEDSEDEE. 3 positions are modified to phosphoserine: Ser441, Ser442, and Ser445. Basic residues-rich tracts occupy residues 488-509 and 542-553; these read GKVRPLPKKAPPKAKTPARKGR and SAMKKKSFKTKK.

Interacts (via PxVxL motif) with CBX5.

The protein localises to the nucleus. The protein resides in the chromosome. In terms of biological role, component of heterochromatin that maintains heterochromatin integrity during G1/S progression and regulates the duration of G1 phase to critically influence cell proliferative capacity. May play a role in hypoxia-induced oncogenesis. The protein is Heterochromatin protein 1-binding protein 3 (Hp1bp3) of Rattus norvegicus (Rat).